The chain runs to 233 residues: Lipoprotein-releasing system ATP-binding protein LolD (233 aa).

The region spanning 6–233 (LQCDNLCKRY…TAELSLMGAE (228 aa)) is the ABC transporter domain. 42 to 49 (GSSGSGKS) contributes to the ATP binding site.

Belongs to the ABC transporter superfamily. Lipoprotein translocase (TC 3.A.1.125) family. In terms of assembly, the complex is composed of two ATP-binding proteins (LolD) and two transmembrane proteins (LolC and LolE).

Its subcellular location is the cell inner membrane. Its function is as follows. Part of the ABC transporter complex LolCDE involved in the translocation of mature outer membrane-directed lipoproteins, from the inner membrane to the periplasmic chaperone, LolA. Responsible for the formation of the LolA-lipoprotein complex in an ATP-dependent manner. The chain is Lipoprotein-releasing system ATP-binding protein LolD from Shigella flexneri.